A 206-amino-acid chain; its full sequence is Large ribosomal subunit protein uL3 (206 aa).

It belongs to the universal ribosomal protein uL3 family. Part of the 50S ribosomal subunit. Forms a cluster with proteins L14 and L19.

In terms of biological role, one of the primary rRNA binding proteins, it binds directly near the 3'-end of the 23S rRNA, where it nucleates assembly of the 50S subunit. In Cytophaga hutchinsonii (strain ATCC 33406 / DSM 1761 / CIP 103989 / NBRC 15051 / NCIMB 9469 / D465), this protein is Large ribosomal subunit protein uL3.